A 249-amino-acid polypeptide reads, in one-letter code: Triosephosphate isomerase (249 aa).

Residues Asn12 and Lys14 each contribute to the substrate site. An N6-acetyllysine modification is found at Lys14. Position 21 is a phosphoserine (Ser21). A 3'-nitrotyrosine modification is found at Tyr68. Phosphoserine is present on Ser80. His96 (electrophile) is an active-site residue. Residue Ser106 is modified to Phosphoserine. Lys142 is covalently cross-linked (Glycyl lysine isopeptide (Lys-Gly) (interchain with G-Cter in SUMO1)). Lys149 carries the post-translational modification N6-succinyllysine. Lys156 carries the N6-acetyllysine; alternate modification. Lys156 carries the post-translational modification N6-succinyllysine; alternate. The residue at position 159 (Ser159) is a Phosphoserine. The active-site Proton acceptor is Glu166. Thr173 is subject to Phosphothreonine. Lys194 carries the post-translational modification N6-acetyllysine; alternate. At Lys194 the chain carries N6-succinyllysine; alternate. Residue Lys194 is modified to N6-methyllysine; alternate. A Phosphoserine modification is found at Ser198. Tyr209 is subject to 3'-nitrotyrosine. The residue at position 212 (Ser212) is a Phosphoserine. A Phosphothreonine modification is found at Thr214. Position 223 is a phosphoserine (Ser223). N6-acetyllysine is present on Lys238.

It belongs to the triosephosphate isomerase family. Homodimer.

It localises to the cytoplasm. It catalyses the reaction D-glyceraldehyde 3-phosphate = dihydroxyacetone phosphate. It carries out the reaction dihydroxyacetone phosphate = methylglyoxal + phosphate. It participates in carbohydrate degradation; glycolysis; D-glyceraldehyde 3-phosphate from glycerone phosphate: step 1/1. It functions in the pathway carbohydrate biosynthesis; gluconeogenesis. Its function is as follows. Triosephosphate isomerase is an extremely efficient metabolic enzyme that catalyzes the interconversion between dihydroxyacetone phosphate (DHAP) and D-glyceraldehyde-3-phosphate (G3P) in glycolysis and gluconeogenesis. It is also responsible for the non-negligible production of methylglyoxal a reactive cytotoxic side-product that modifies and can alter proteins, DNA and lipids. In Homo sapiens (Human), this protein is Triosephosphate isomerase (TPI1).